The chain runs to 1299 residues: DExH-box ATP-dependent RNA helicase DExH6 (1299 aa).

Positions 15–82 (PTSVEATRIW…QRRLSIFKSR (68 aa)) constitute an R3H domain. In terms of domain architecture, Helicase ATP-binding spans 197–366 (TSAVESNQVI…FGGCPVVRVP (170 aa)). Residue 210-217 (GETGCGKT) coordinates ATP. A DEIH box motif is present at residues 313-316 (DEIH). Residues 537-711 (LIQQLMRKIC…ELCLQVKILD (175 aa)) form the Helicase C-terminal domain. Disordered regions lie at residues 987-1039 (PTGS…MMSS) and 1175-1299 (IPRQ…AEQK). Over residues 992-1006 (DSDDSNEEEEDDEEV) the composition is skewed to acidic residues. Low complexity predominate over residues 1007–1020 (AANTNEEVAANTNE). The segment covering 1023 to 1032 (MDIHKEESRR) has biased composition (basic and acidic residues). Composition is skewed to polar residues over residues 1176 to 1193 (PRQQ…NNTD), 1204 to 1214 (NPTNRINQPEA), and 1239 to 1251 (PSDQ…QHNT). Positions 1182–1200 (KQRNPKATNNTDSGKKKEK) match the Bipartite nuclear localization signal motif. Residues 1267-1283 (KKTKTRSGNNSDSGKKK) carry the Bipartite nuclear localization signal motif. Residues 1279-1299 (SGKKKEQYIPKRQREDKAEQK) show a composition bias toward basic and acidic residues.

The protein belongs to the DExH box helicase family. Specifically expressed in the tapetum and vascular tissues.

The protein localises to the nucleus. The catalysed reaction is ATP + H2O = ADP + phosphate + H(+). In terms of biological role, may function as an ATP-dependent RNA/DNA helicase. This Arabidopsis thaliana (Mouse-ear cress) protein is DExH-box ATP-dependent RNA helicase DExH6.